The chain runs to 942 residues: Isoleucine--tRNA ligase (942 aa).

The 'HIGH' region signature appears at 58 to 68; that stretch reads PYANGDIHIGH. Residue E566 participates in L-isoleucyl-5'-AMP binding. The 'KMSKS' region motif lies at 607–611; that stretch reads KMSKS. K610 lines the ATP pocket. Zn(2+)-binding residues include C905, C908, C925, and C928.

It belongs to the class-I aminoacyl-tRNA synthetase family. IleS type 1 subfamily. In terms of assembly, monomer. It depends on Zn(2+) as a cofactor.

Its subcellular location is the cytoplasm. The catalysed reaction is tRNA(Ile) + L-isoleucine + ATP = L-isoleucyl-tRNA(Ile) + AMP + diphosphate. Functionally, catalyzes the attachment of isoleucine to tRNA(Ile). As IleRS can inadvertently accommodate and process structurally similar amino acids such as valine, to avoid such errors it has two additional distinct tRNA(Ile)-dependent editing activities. One activity is designated as 'pretransfer' editing and involves the hydrolysis of activated Val-AMP. The other activity is designated 'posttransfer' editing and involves deacylation of mischarged Val-tRNA(Ile). The protein is Isoleucine--tRNA ligase of Vibrio parahaemolyticus serotype O3:K6 (strain RIMD 2210633).